A 223-amino-acid polypeptide reads, in one-letter code: MDVKIIWHGHACFSIEGKKNVLIDPFLTGNPMAKVKAEDLNPDIILVTHGHYDHAADAVSISKRTGAPVLSVFELSEIFKESGINTIDINPGGTVEFEGVSIKATIATHSSSYDGRYAGNPVGYVIDIGRKIYHAGDTGYFKDMELIGSVDRPEISLLPIGGHYTMDVDGAVEALKMLKSPIAIPMHYNTFDVIKADPLRFKNLAAAVGTYVIVPKVEEPVEL.

It belongs to the UPF0173 family.

The protein is UPF0173 metal-dependent hydrolase TV0864 of Thermoplasma volcanium (strain ATCC 51530 / DSM 4299 / JCM 9571 / NBRC 15438 / GSS1).